The sequence spans 68 residues: Serine rich endogenous peptide 22 (68 aa).

The N-terminal stretch at 1–25 (MNKALVWLITLLFLIFSATPNRVLA) is a signal peptide. The short motif at 50 to 64 (KIGVGASNSGHSPGA) is the SCOOP motif element. The SxS motif essential for MIK2 binding signature appears at 56–58 (SNS).

Belongs to the serine rich endogenous peptide (SCOOP) phytocytokine family. As to quaternary structure, interacts with MIK2 (via extracellular leucine-rich repeat domain); this interaction triggers the formation of complex between MIK2 and the BAK1/SERK3 and SERK4 coreceptors, and subsequent BAK1 activation by phosphorylation.

It localises to the cell membrane. The protein resides in the secreted. The protein localises to the extracellular space. It is found in the apoplast. In terms of biological role, brassicaceae-specific phytocytokine (plant endogenous peptide released into the apoplast) perceived by MIK2 in a BAK1/SERK3 and SERK4 coreceptors-dependent manner, that modulates various physiological and antimicrobial processes including growth prevention and reactive oxygen species (ROS) response regulation. The chain is Serine rich endogenous peptide 22 from Arabidopsis thaliana (Mouse-ear cress).